We begin with the raw amino-acid sequence, 153 residues long: UPF0756 membrane protein LCA_1031 (153 aa).

A run of 4 helical transmembrane segments spans residues 4–24 (WLFLAAILIVALLAKNQSLII), 52–72 (WGVTVISVAILVPIATGQIGF), 85–105 (FIAVGCGVLVAVLSAKGVGLL), and 115–135 (LVFGTIMGVVFLKGIAAGPVI).

The protein belongs to the UPF0756 family.

It is found in the cell membrane. This is UPF0756 membrane protein LCA_1031 from Latilactobacillus sakei subsp. sakei (strain 23K) (Lactobacillus sakei subsp. sakei).